Reading from the N-terminus, the 473-residue chain is Zinc transporter SLC39A7 (473 aa).

A helical transmembrane segment spans residues 11 to 31; that stretch reads VAVGLLTWAALGLLVAGHGGH. 2 stretches are compositionally biased toward basic and acidic residues: residues 44 to 56 and 66 to 114; these read GHSH…DFHH and HTHE…EHSH. Residues 44–120 are disordered; it reads GHSHRHSHED…EHSHGGYGES (77 aa). At H66 the chain carries Pros-methylhistidine. 3 helical membrane passes run 138-158, 169-189, and 214-234; these read ALGA…LIPV, LQIL…LHLI, and GPIL…LVVE. The segment at 243–316 is disordered; sequence GHEHSHGHGH…QHSGEEKAGS (74 aa). A phosphoserine mark is found at S278 and S279. Over residues 298–316 the composition is skewed to basic and acidic residues; that stretch reads RPKDGPVRPQHSGEEKAGS. Residues 388–408 traverse the membrane as a helical segment; that stretch reads LLTAVGALAGTAFALLTEGGA. Residues 428-473 are disordered; it reads GDQAATQASPRSTSLPPVGEEDFREDPGPRQKGQQEKSGINVNCVS. Residues 431–442 are compositionally biased toward polar residues; sequence AATQASPRSTSL. Residues 452 to 462 are compositionally biased toward basic and acidic residues; sequence EDPGPRQKGQQ. Positions 463–473 are enriched in polar residues; that stretch reads EKSGINVNCVS.

The protein belongs to the ZIP transporter (TC 2.A.5) family. KE4/Catsup subfamily. In terms of assembly, homodimer. Post-translationally, methylation at some His residue by METTL9 leads to reduced zinc-binding. In terms of processing, rapidly phosphorylated by CK2 following Zn(2+) treatment. This phosphorylation is required for efficient cytosolic Zn(2+) release.

The protein localises to the endoplasmic reticulum membrane. It localises to the golgi apparatus. Its subcellular location is the cis-Golgi network membrane. It carries out the reaction Zn(2+)(in) = Zn(2+)(out). Functionally, transports Zn(2+) from the endoplasmic reticulum (ER)/Golgi apparatus to the cytosol, playing an essential role in the regulation of cytosolic zinc levels. Acts as a gatekeeper of zinc release from intracellular stores, requiring post-translational activation by phosphorylation on residues, resulting in activation of multiple downstream pathways leading to cell growth and proliferation. Has an essential role in B cell development and is required for proper B cell receptor signaling. Plays an important role in maintaining intestinal epithelial homeostasis and skin dermis development by regulating ER function. Controls cell signaling pathways involved in glucose metabolism in skeletal muscle. Has a protective role against ER stress in different biological contexts. Mediates Zn(2+)-induced ferroptosis. The protein is Zinc transporter SLC39A7 (SLC39A7) of Sus scrofa (Pig).